Consider the following 243-residue polypeptide: MNLLLLSNSTQHGRGYLEHALDTVTGFLPAGARLAFVPYALADHDTYTARVRGALADAGIDVRGVHEGGDPLARLDEADAVFVGGGNSFRLLSALYRTGLREALVKAVRGGLPYMGASAGTNMAAPSLRTTNDMPIVEPPSFETLGLVPFQINPHYLDPDPGSTHKGETREERLREFLEENDVPVLGLREGSWLRVEGDRAVLGGERDARLFRRGTAPRELAVGSDLSELLDVRGEFDTGTRS.

Catalysis depends on charge relay system residues Ser-118, Asp-133, and His-155.

This sequence belongs to the peptidase S51 family.

The protein resides in the cytoplasm. The enzyme catalyses Dipeptidase E catalyzes the hydrolysis of dipeptides Asp-|-Xaa. It does not act on peptides with N-terminal Glu, Asn or Gln, nor does it cleave isoaspartyl peptides.. Functionally, hydrolyzes dipeptides containing N-terminal aspartate residues. May play a role in allowing the cell to use peptide aspartate to spare carbon otherwise required for the synthesis of the aspartate family of amino acids. This chain is Peptidase E, found in Streptomyces coelicolor (strain ATCC BAA-471 / A3(2) / M145).